We begin with the raw amino-acid sequence, 125 residues long: MGCICGHLQLLGCLRHCLNRNGGGTLVVAFAFTAFFSLLTILEVLSALNIFGGEGTLMNAFVLGTITATFAKGVVVRRDSYLFVASLLAAAFSVLMILVYMASGSFSYGIFGLVTVPYLVKKARK.

3 helical membrane-spanning segments follow: residues 20–42 (RNGG…LTIL), 57–76 (LMNA…GVVV), and 81–103 (YLFV…YMAS).

It localises to the cell membrane. This is an uncharacterized protein from Archaeoglobus fulgidus (strain ATCC 49558 / DSM 4304 / JCM 9628 / NBRC 100126 / VC-16).